Here is a 132-residue protein sequence, read N- to C-terminus: Interleukin-13 (132 aa).

Residues 1–18 (MALLLTMVIALTCLGGFA) form the signal peptide. 4 N-linked (GlcNAc...) asparagine glycosylation sites follow: asparagine 38, asparagine 49, asparagine 57, and asparagine 72. 2 disulfide bridges follow: cysteine 48–cysteine 76 and cysteine 64–cysteine 90.

Belongs to the IL-4/IL-13 family. Interacts with IL13RA2.

It localises to the secreted. Cytokine that plays important roles in allergic inflammation and immune response to parasite infection. Synergizes with IL2 in regulating interferon-gamma synthesis. Stimulates B-cell proliferation, and activation of eosinophils, basophils, and mast cells. Plays an important role in controlling IL33 activity by modulating the production of transmembrane and soluble forms of interleukin-1 receptor-like 1/IL1RL1. Displays the capacity to antagonize Th1-driven proinflammatory immune response and downregulates synthesis of many proinflammatory cytokines including IL1, IL6, IL10, IL12 and TNF-alpha through a mechanism that partially involves suppression of NF-kappa-B. Also functions on nonhematopoietic cells, including endothelial cells where it induces vascular cell adhesion protein 1/VCAM1, which is important in the recruitment of eosinophils. Exerts its biological effects through its receptors which comprises the IL4R chain and the IL13RA1 chain, to activate JAK1 and TYK2, leading to the activation of STAT6. Aside from IL13RA1, another receptor IL13RA2 acts as a high affinity decoy for IL13 and mediates internalization and depletion of extracellular IL13. The polypeptide is Interleukin-13 (IL13) (Macaca thibetana (Pere David's macaque)).